The sequence spans 420 residues: Gamma-glutamyl phosphate reductase (420 aa).

This sequence belongs to the gamma-glutamyl phosphate reductase family.

The protein localises to the cytoplasm. The catalysed reaction is L-glutamate 5-semialdehyde + phosphate + NADP(+) = L-glutamyl 5-phosphate + NADPH + H(+). Its pathway is amino-acid biosynthesis; L-proline biosynthesis; L-glutamate 5-semialdehyde from L-glutamate: step 2/2. Its function is as follows. Catalyzes the NADPH-dependent reduction of L-glutamate 5-phosphate into L-glutamate 5-semialdehyde and phosphate. The product spontaneously undergoes cyclization to form 1-pyrroline-5-carboxylate. The sequence is that of Gamma-glutamyl phosphate reductase from Shewanella amazonensis (strain ATCC BAA-1098 / SB2B).